The primary structure comprises 602 residues: Proteasome-associated ATPase (602 aa).

The segment covering 1-13 (MQHDLPGGRHDEA) has biased composition (basic and acidic residues). The segment at 1 to 33 (MQHDLPGGRHDEADSSETGGAGTTENPSSEQAR) is disordered. Over residues 23 to 32 (TTENPSSEQA) the composition is skewed to polar residues. The stretch at 28-103 (SSEQARQIRF…LREEVDRLAQ (76 aa)) forms a coiled coil. 291-296 (GCGKTL) contributes to the ATP binding site. Residues 601–602 (YL) are docks into pockets in the proteasome alpha-ring.

Belongs to the AAA ATPase family. In terms of assembly, homohexamer. Assembles into a hexameric ring structure that caps the 20S proteasome core. Strongly interacts with the prokaryotic ubiquitin-like protein Pup through a hydrophobic interface; the interacting region of ARC lies in its N-terminal coiled-coil domain. There is one Pup binding site per ARC hexamer ring. Upon ATP-binding, the C-terminus of ARC interacts with the alpha-rings of the proteasome core, possibly by binding to the intersubunit pockets.

It functions in the pathway protein degradation; proteasomal Pup-dependent pathway. Its function is as follows. ATPase which is responsible for recognizing, binding, unfolding and translocation of pupylated proteins into the bacterial 20S proteasome core particle. May be essential for opening the gate of the 20S proteasome via an interaction with its C-terminus, thereby allowing substrate entry and access to the site of proteolysis. Thus, the C-termini of the proteasomal ATPase may function like a 'key in a lock' to induce gate opening and therefore regulate proteolysis. This chain is Proteasome-associated ATPase, found in Saccharomonospora viridis (strain ATCC 15386 / DSM 43017 / JCM 3036 / CCUG 5913 / NBRC 12207 / NCIMB 9602 / P101) (Thermoactinomyces viridis).